A 122-amino-acid polypeptide reads, in one-letter code: Urease subunit beta (122 aa).

The disordered stretch occupies residues 102–122; that stretch reads DGGTAVAGEPRPGIAAERDHQ.

Belongs to the urease beta subunit family. As to quaternary structure, heterotrimer of UreA (gamma), UreB (beta) and UreC (alpha) subunits. Three heterotrimers associate to form the active enzyme.

The protein localises to the cytoplasm. The catalysed reaction is urea + 2 H2O + H(+) = hydrogencarbonate + 2 NH4(+). Its pathway is nitrogen metabolism; urea degradation; CO(2) and NH(3) from urea (urease route): step 1/1. In Paenarthrobacter aurescens (strain TC1), this protein is Urease subunit beta.